An 822-amino-acid chain; its full sequence is DNA-directed RNA polymerase subunit beta N-terminal section (822 aa).

The segment at 376-408 (ELTEGNPSSKSQTKNKTSASKKSKTLNVANTKG) is disordered. Residues 383–393 (SSKSQTKNKTS) show a composition bias toward low complexity.

The protein belongs to the RNA polymerase beta chain family. In plastids the minimal PEP RNA polymerase catalytic core is composed of four subunits: alpha, beta, beta', and beta''. When a (nuclear-encoded) sigma factor is associated with the core the holoenzyme is formed, which can initiate transcription.

The protein localises to the plastid. It is found in the chloroplast. It carries out the reaction RNA(n) + a ribonucleoside 5'-triphosphate = RNA(n+1) + diphosphate. DNA-dependent RNA polymerase catalyzes the transcription of DNA into RNA using the four ribonucleoside triphosphates as substrates. The chain is DNA-directed RNA polymerase subunit beta N-terminal section (rpoB1) from Chlamydomonas reinhardtii (Chlamydomonas smithii).